The sequence spans 186 residues: uncharacterized protein (186 aa).

An N-linked (GlcNAc...) asparagine; by host glycan is attached at asparagine 34. The next 3 membrane-spanning stretches (helical) occupy residues 47–67 (IGMV…ATTF), 114–134 (ILET…IVLL), and 144–164 (LEMI…TLFF).

It is found in the membrane. This is an uncharacterized protein from Acanthamoeba polyphaga mimivirus (APMV).